Reading from the N-terminus, the 863-residue chain is Receptor-like protein 9DC3 (863 aa).

The N-terminal stretch at 1–21 (MGCVKLVFFMLYVFLFQLVSS) is a signal peptide. Topologically, residues 22 to 812 (SSLPHLCPED…EEDSPMISWQ (791 aa)) are extracellular. An N-cap region spans residues 24-90 (LPHLCPEDQA…GVHCDETTGQ (67 aa)). N-linked (GlcNAc...) asparagine glycans are attached at residues N71 and N108. One copy of the LRR 1; degenerate repeat lies at 91-114 (VIALDLRCSQLQGKFHSNSSLFQL). 2 LRR repeats span residues 115–138 (SNLK…KFGE) and 140–163 (SDLT…ISHL). The LRR 4; degenerate repeat unit spans residues 164 to 190 (SKLHVLLIGDQYGLSIVPHNFEPLLKN). N-linked (GlcNAc...) asparagine glycosylation is found at N190, N203, and N211. LRR repeat units lie at residues 191 to 213 (LTQL…SNFS), 214 to 237 (SHLT…VFHL), 240 to 262 (LEFL…KWNS), 264 to 286 (ASLM…SFSH), 287 to 311 (LTSL…LWNL), and 312 to 336 (TNIE…IFEK). N261 carries N-linked (GlcNAc...) asparagine glycosylation. N-linked (GlcNAc...) asparagine glycosylation is found at N299 and N310. An LRR 11; degenerate repeat occupies 337-357 (LKKLSLFRNDNLDGGLEFLSF). LRR repeat units lie at residues 358–382 (NTQL…ISGL), 383–406 (QNLE…IFSL), 408–428 (SLVE…EFKS), 429–452 (KTLS…LLNQ), 454–476 (NLQL…ICNL), 477–500 (KTLI…VVER), 502–524 (EYLS…TFSV), 525–549 (GNIL…LINC), 551–572 (YLAL…WLGH), 573–597 (LSQL…GNTN), 599–623 (FTRL…ILGN), 667–690 (LDSN…IIGD), 691–714 (LVGL…SFQN), 715–739 (LSVL…LASL), and 741–759 (FLEV…IPKG). Residues N378, N396, and N416 are each glycosylated (N-linked (GlcNAc...) asparagine). N464 carries N-linked (GlcNAc...) asparagine glycosylation. The N-linked (GlcNAc...) asparagine glycan is linked to N519. N-linked (GlcNAc...) asparagine glycosylation is present at N563. 3 N-linked (GlcNAc...) asparagine glycosylation sites follow: N674, N698, and N714. N-linked (GlcNAc...) asparagine glycans are attached at residues N746 and N767. The C-cap/acidic domain stretch occupies residues 760-812 (KQFDSFGNTSYQGNDGLCGFPLSKLCGGDDQVTTPAELDQEEEEEDSPMISWQ). Residues 813–833 (GVLVGYGCGLVIGLSVIYIMW) traverse the membrane as a helical segment. Topologically, residues 834–863 (STQYPAWFSRMHLKLEQIVTTRMKKHKKRY) are cytoplasmic.

It belongs to the RLP family.

Its subcellular location is the cell membrane. Involved in plant defense. Confers resistance to the fungal pathogen C.fulvum through recognition of the AVR9 elicitor protein. This Solanum pimpinellifolium (Currant tomato) protein is Receptor-like protein 9DC3.